The primary structure comprises 550 residues: Hydroxylamine reductase (550 aa).

[2Fe-2S] cluster is bound by residues Cys-3, Cys-6, Cys-18, and Cys-25. Positions 249, 273, 317, 405, 433, 458, 492, and 494 each coordinate hybrid [4Fe-2O-2S] cluster. A Cysteine persulfide modification is found at Cys-405.

It belongs to the HCP family. [2Fe-2S] cluster serves as cofactor. The cofactor is hybrid [4Fe-2O-2S] cluster.

It is found in the cytoplasm. It catalyses the reaction A + NH4(+) + H2O = hydroxylamine + AH2 + H(+). In terms of biological role, catalyzes the reduction of hydroxylamine to form NH(3) and H(2)O. The protein is Hydroxylamine reductase of Salmonella enteritidis PT4 (strain P125109).